A 1301-amino-acid chain; its full sequence is DNA-directed RNA polymerase subunit beta (1301 aa).

This sequence belongs to the RNA polymerase beta chain family. In terms of assembly, the RNAP catalytic core consists of 2 alpha, 1 beta, 1 beta' and 1 omega subunit. When a sigma factor is associated with the core the holoenzyme is formed, which can initiate transcription.

It catalyses the reaction RNA(n) + a ribonucleoside 5'-triphosphate = RNA(n+1) + diphosphate. Functionally, DNA-dependent RNA polymerase catalyzes the transcription of DNA into RNA using the four ribonucleoside triphosphates as substrates. The chain is DNA-directed RNA polymerase subunit beta from Chlorobium luteolum (strain DSM 273 / BCRC 81028 / 2530) (Pelodictyon luteolum).